The sequence spans 616 residues: Chaperone protein HscA (616 aa).

It belongs to the heat shock protein 70 family.

Chaperone involved in the maturation of iron-sulfur cluster-containing proteins. Has a low intrinsic ATPase activity which is markedly stimulated by HscB. Involved in the maturation of IscU. The chain is Chaperone protein HscA from Cronobacter sakazakii (strain ATCC BAA-894) (Enterobacter sakazakii).